Reading from the N-terminus, the 387-residue chain is MTEQYYKIALLFNANKVYDRQVVEGIGQYIQASQCMWDIFVEDEFIYHTDTINQLSIDGIIADFDDPKTVELLQHTLIPTIAVGGSYKQADFYPHFPYIATDNMALVEMALSHLQEKGLSQFAFYGLQVNTHKHWSIERRDAFVELMEKNHYPIYLYEGVQVHAQNWLEEQQKLIVWLKSLPSHTGIIAVTDARARHLLQACEYSKIAVPEELCVVGIDNEELIQYLSRMSLSSVEQGTREIGYQAAKLLHKLLNGQKVSHTPILIPPITVHSRNSTDYRSLTDPLVIQAMHYIRHRACHRIKVGQVLDHLETSRSNLEQRFKNEMNKTIHQVIHEEKISRAKNLLQQTDISIKEITEICGYPSIQYFYSVFKKEFEMTPKEFRLNC.

Residues 288–386 (IQAMHYIRHR…EMTPKEFRLN (99 aa)) form the HTH araC/xylS-type domain. 2 DNA-binding regions (H-T-H motif) span residues 305 to 326 (GQVL…KNEM) and 353 to 376 (IKEI…KKEF).

Functionally, regulatory protein for the xylBAFGHR operon. The polypeptide is Xylose operon regulatory protein (xylR) (Haemophilus influenzae (strain ATCC 51907 / DSM 11121 / KW20 / Rd)).